We begin with the raw amino-acid sequence, 547 residues long: Inactive delta-guaiene synthase (547 aa).

The Mg(2+) site is built by Asp299, Asp303, and Asp444. Residues 299–303 carry the DDXXD motif motif; it reads DDTYD.

Belongs to the terpene synthase family. It depends on Mg(2+) as a cofactor.

The protein is Inactive delta-guaiene synthase (C1) of Aquilaria crassna (Eagle wood).